The sequence spans 277 residues: 3-methyl-2-oxobutanoate hydroxymethyltransferase (277 aa).

2 residues coordinate Mg(2+): aspartate 53 and aspartate 96. 3-methyl-2-oxobutanoate contacts are provided by residues 53 to 54 (DS), aspartate 96, and lysine 126. Residue glutamate 128 coordinates Mg(2+). The active-site Proton acceptor is glutamate 195.

Belongs to the PanB family. As to quaternary structure, homodecamer; pentamer of dimers. Mg(2+) is required as a cofactor.

The protein resides in the cytoplasm. The enzyme catalyses 3-methyl-2-oxobutanoate + (6R)-5,10-methylene-5,6,7,8-tetrahydrofolate + H2O = 2-dehydropantoate + (6S)-5,6,7,8-tetrahydrofolate. The protein operates within cofactor biosynthesis; (R)-pantothenate biosynthesis; (R)-pantoate from 3-methyl-2-oxobutanoate: step 1/2. Catalyzes the reversible reaction in which hydroxymethyl group from 5,10-methylenetetrahydrofolate is transferred onto alpha-ketoisovalerate to form ketopantoate. In Chlorobium phaeobacteroides (strain BS1), this protein is 3-methyl-2-oxobutanoate hydroxymethyltransferase.